A 228-amino-acid polypeptide reads, in one-letter code: Histidine decarboxylase (228 aa).

Histidine 30 contributes to the substrate binding site. Residue lysine 143 is modified to N6-(pyridoxal phosphate)lysine.

The protein belongs to the group II decarboxylase family. Homotetramer. Requires pyridoxal 5'-phosphate as cofactor.

It carries out the reaction L-histidine + H(+) = histamine + CO2. This Raoultella ornithinolytica (Klebsiella ornithinolytica) protein is Histidine decarboxylase (hdc).